Consider the following 492-residue polypeptide: JmjC domain-containing histone demethylation protein 1 (492 aa).

The PHD-type; atypical zinc finger occupies 4–72 (PNICQHCQLK…SYRCPNHKEG (69 aa)). The JmjC domain maps to 254–409 (TAVRQNDLVD…THLKIVEIEK (156 aa)). Residue Thr-302 coordinates substrate. Fe cation is bound by residues His-305 and Asp-307. Residue Lys-322 coordinates substrate. Residue His-377 participates in Fe cation binding.

The protein belongs to the JHDM1 histone demethylase family. Fe(2+) serves as cofactor.

It is found in the nucleus. It carries out the reaction N(6),N(6)-dimethyl-L-lysyl(36)-[histone H3] + 2 2-oxoglutarate + 2 O2 = L-lysyl(36)-[histone H3] + 2 formaldehyde + 2 succinate + 2 CO2. Functionally, histone demethylase that specifically demethylates 'Lys-36' of histone H3, thereby playing a central role in histone code. Does not demethylate H3 'Lys-4' nor 'Lys-79'. In Saccharomyces cerevisiae (strain ATCC 204508 / S288c) (Baker's yeast), this protein is JmjC domain-containing histone demethylation protein 1 (JHD1).